A 306-amino-acid chain; its full sequence is Probable arylamine N-acetyltransferase 3 (306 aa).

Cysteine 75 acts as the Acyl-thioester intermediate in catalysis. Residues histidine 115 and aspartate 130 contribute to the active site.

The protein belongs to the arylamine N-acetyltransferase family.

It catalyses the reaction an arylamine + acetyl-CoA = an N-acetylarylamine + CoA. In Dictyostelium discoideum (Social amoeba), this protein is Probable arylamine N-acetyltransferase 3.